Consider the following 355-residue polypeptide: UDP-N-acetylglucosamine--N-acetylmuramyl-(pentapeptide) pyrophosphoryl-undecaprenol N-acetylglucosamine transferase (355 aa).

UDP-N-acetyl-alpha-D-glucosamine contacts are provided by arginine 166, serine 196, and glutamine 290.

The protein belongs to the glycosyltransferase 28 family. MurG subfamily.

The protein localises to the cell membrane. The enzyme catalyses Mur2Ac(oyl-L-Ala-gamma-D-Glu-L-Lys-D-Ala-D-Ala)-di-trans,octa-cis-undecaprenyl diphosphate + UDP-N-acetyl-alpha-D-glucosamine = beta-D-GlcNAc-(1-&gt;4)-Mur2Ac(oyl-L-Ala-gamma-D-Glu-L-Lys-D-Ala-D-Ala)-di-trans,octa-cis-undecaprenyl diphosphate + UDP + H(+). It functions in the pathway cell wall biogenesis; peptidoglycan biosynthesis. In terms of biological role, cell wall formation. Catalyzes the transfer of a GlcNAc subunit on undecaprenyl-pyrophosphoryl-MurNAc-pentapeptide (lipid intermediate I) to form undecaprenyl-pyrophosphoryl-MurNAc-(pentapeptide)GlcNAc (lipid intermediate II). The protein is UDP-N-acetylglucosamine--N-acetylmuramyl-(pentapeptide) pyrophosphoryl-undecaprenol N-acetylglucosamine transferase of Staphylococcus haemolyticus (strain JCSC1435).